Consider the following 96-residue polypeptide: Translation initiation factor 1A 1 (96 aa).

Positions 8–82 (GSHDLRMPDD…EKGDITWRYE (75 aa)) constitute an S1-like domain.

It belongs to the eIF-1A family.

Functionally, seems to be required for maximal rate of protein biosynthesis. Enhances ribosome dissociation into subunits and stabilizes the binding of the initiator Met-tRNA(I) to 40 S ribosomal subunits. The polypeptide is Translation initiation factor 1A 1 (Haloquadratum walsbyi (strain DSM 16790 / HBSQ001)).